Consider the following 368-residue polypeptide: Phospho-N-acetylmuramoyl-pentapeptide-transferase (368 aa).

The next 10 helical transmembrane spans lie at 2–22 (IALI…TPLL), 51–71 (TLGG…SALY), 80–100 (PTWA…LGFI), 116–136 (VGGK…LALI), 166–186 (IVAI…WTNA), 193–213 (LDGL…IIAM), 234–254 (PLDL…FLWY), 256–276 (CNPA…GLFA), 277–297 (ALSI…LFVV), and 340–360 (FWIV…GNWV).

Belongs to the glycosyltransferase 4 family. MraY subfamily. Mg(2+) is required as a cofactor.

The protein resides in the cell membrane. The catalysed reaction is UDP-N-acetyl-alpha-D-muramoyl-L-alanyl-gamma-D-glutamyl-meso-2,6-diaminopimeloyl-D-alanyl-D-alanine + di-trans,octa-cis-undecaprenyl phosphate = di-trans,octa-cis-undecaprenyl diphospho-N-acetyl-alpha-D-muramoyl-L-alanyl-D-glutamyl-meso-2,6-diaminopimeloyl-D-alanyl-D-alanine + UMP. It functions in the pathway cell wall biogenesis; peptidoglycan biosynthesis. Catalyzes the initial step of the lipid cycle reactions in the biosynthesis of the cell wall peptidoglycan: transfers peptidoglycan precursor phospho-MurNAc-pentapeptide from UDP-MurNAc-pentapeptide onto the lipid carrier undecaprenyl phosphate, yielding undecaprenyl-pyrophosphoryl-MurNAc-pentapeptide, known as lipid I. This chain is Phospho-N-acetylmuramoyl-pentapeptide-transferase, found in Bifidobacterium animalis subsp. lactis (strain AD011).